The following is a 217-amino-acid chain: Large ribosomal subunit protein uL29m (217 aa).

This sequence belongs to the universal ribosomal protein uL29 family. As to quaternary structure, component of the mitochondrial large ribosomal subunit. Mature mitochondrial ribosomes consist of a small (37S) and a large (54S) subunit. The 37S subunit contains at least 33 different proteins and 1 molecule of RNA (15S). The 54S subunit contains at least 45 different proteins and 1 molecule of RNA (21S).

It localises to the mitochondrion. The sequence is that of Large ribosomal subunit protein uL29m (mrpl4) from Aspergillus fumigatus (strain ATCC MYA-4609 / CBS 101355 / FGSC A1100 / Af293) (Neosartorya fumigata).